The sequence spans 456 residues: Keratin, type I cuticular Ha8 (456 aa).

Positions 1 to 104 are head; sequence MTSSYSSSSC…YGENTLNGHE (104 aa). Residues 104-415 form the IF rod domain; the sequence is EKETMQFLND…NLLESEDCKL (312 aa). Positions 105-139 are coil 1A; sequence KETMQFLNDRLANYLEKVRQLEQENAELEATLLER. The segment at 140–150 is linker 1; sequence SKCHESTVCPD. Residues 151–251 are coil 1B; the sequence is YQSYFHTIEE…HEQEVKILRS (101 aa). Positions 252-267 are linker 12; that stretch reads QLGEKLRIELDIEPTI. Residues 268–411 form a coil 2 region; it reads DLNRVLGEMR…ATYRNLLESE (144 aa). The segment at 412-456 is tail; that stretch reads DCKLPCNPCSTSPSCVTAPCAPRPSCGPCTTCGPTCGASTTGSRF.

This sequence belongs to the intermediate filament family.

This chain is Keratin, type I cuticular Ha8 (KRT38), found in Homo sapiens (Human).